We begin with the raw amino-acid sequence, 626 residues long: Phosphomethylpyrimidine synthase (626 aa).

Substrate contacts are provided by residues Asn-237, Met-266, Tyr-295, His-331, 351–353 (SRG), 392–395 (DGLR), and Glu-431. Position 435 (His-435) interacts with Zn(2+). Residue Tyr-458 participates in substrate binding. Zn(2+) is bound at residue His-499. Residues Cys-579, Cys-582, and Cys-587 each contribute to the [4Fe-4S] cluster site.

It belongs to the ThiC family. In terms of assembly, homodimer. It depends on [4Fe-4S] cluster as a cofactor.

The enzyme catalyses 5-amino-1-(5-phospho-beta-D-ribosyl)imidazole + S-adenosyl-L-methionine = 4-amino-2-methyl-5-(phosphooxymethyl)pyrimidine + CO + 5'-deoxyadenosine + formate + L-methionine + 3 H(+). The protein operates within cofactor biosynthesis; thiamine diphosphate biosynthesis. In terms of biological role, catalyzes the synthesis of the hydroxymethylpyrimidine phosphate (HMP-P) moiety of thiamine from aminoimidazole ribotide (AIR) in a radical S-adenosyl-L-methionine (SAM)-dependent reaction. The protein is Phosphomethylpyrimidine synthase of Cupriavidus necator (strain ATCC 17699 / DSM 428 / KCTC 22496 / NCIMB 10442 / H16 / Stanier 337) (Ralstonia eutropha).